Consider the following 89-residue polypeptide: Large ribosomal subunit protein bL27 (89 aa).

The segment at 1–20 (MAHKKAGGSSRNGRDSAGRR) is disordered.

This sequence belongs to the bacterial ribosomal protein bL27 family.

The chain is Large ribosomal subunit protein bL27 from Rhizorhabdus wittichii (strain DSM 6014 / CCUG 31198 / JCM 15750 / NBRC 105917 / EY 4224 / RW1) (Sphingomonas wittichii).